Reading from the N-terminus, the 430-residue chain is Adenylosuccinate synthetase (430 aa).

GTP is bound by residues 12 to 18 (GDEGKGK) and 40 to 42 (GHT). The Proton acceptor role is filled by Asp-13. The Mg(2+) site is built by Asp-13 and Gly-40. IMP contacts are provided by residues 13 to 16 (DEGK), 38 to 41 (NAGH), Thr-128, Arg-142, Gln-223, Thr-238, and Arg-302. The active-site Proton donor is the His-41. 298 to 304 (TTTGRPR) provides a ligand contact to substrate. GTP is bound by residues Arg-304, 330 to 332 (SID), and 412 to 414 (SVG).

This sequence belongs to the adenylosuccinate synthetase family. As to quaternary structure, homodimer. It depends on Mg(2+) as a cofactor.

Its subcellular location is the cytoplasm. It catalyses the reaction IMP + L-aspartate + GTP = N(6)-(1,2-dicarboxyethyl)-AMP + GDP + phosphate + 2 H(+). It participates in purine metabolism; AMP biosynthesis via de novo pathway; AMP from IMP: step 1/2. In terms of biological role, plays an important role in the de novo pathway of purine nucleotide biosynthesis. Catalyzes the first committed step in the biosynthesis of AMP from IMP. The polypeptide is Adenylosuccinate synthetase (Enterococcus faecalis (strain ATCC 700802 / V583)).